A 1551-amino-acid chain; its full sequence is Dual oxidase 1 (1551 aa).

Positions 1–21 are cleaved as a signal peptide; it reads MGFCLALTWTFLVGSWTSMGA. Residues 22–596 lie on the Extracellular side of the membrane; sequence QKPISWEVQR…YFEGSGFGFG (575 aa). Residues 26 to 593 are peroxidase-like; mediates peroxidase activity; it reads SWEVQRFDGW…MQDYFEGSGF (568 aa). N-linked (GlcNAc...) asparagine glycosylation is present at Asn94. A disordered region spans residues 197–222; it reads LASGPDPAFPRNAQPPLLMWSAPDPA. N-linked (GlcNAc...) asparagine glycosylation is found at Asn342, Asn354, Asn461, and Asn534. A helical transmembrane segment spans residues 597–617; that stretch reads VTIGTLCCFPLVSLLSAWIVA. Residues 618-1044 are Cytoplasmic-facing; the sequence is RLRKKNFKKL…KRFIENYRRH (427 aa). EF-hand domains are found at residues 815 to 850, 851 to 886, and 895 to 930; these read PQDMFVESMFSLADKDGNGYLSFREFLDILVVFMKG, SPEEKSRLMFRMYDFDGNGLISKDEFIRMLRSFIEI, and QLTEVVESMFRESGFQDKEELTWEDFHFMLRDHDSE. 9 residues coordinate Ca(2+): Asp828, Asp830, Asn832, Tyr834, Glu839, Asp864, Asp866, Asn868, and Glu875. Residues 956 to 1248 are interaction with TXNDC11; sequence YISQEKICPS…GSFGLIQLPR (293 aa). Residues 1045 to 1065 form a helical membrane-spanning segment; it reads IGCVAVFYAITGGLFLERAYY. The Extracellular segment spans residues 1066–1080; the sequence is YAFGAHHMGITDTTR. Residues 1081-1101 form a helical membrane-spanning segment; that stretch reads VGIILSRGTAASISFMFSYIL. Residues 1087-1269 enclose the Ferric oxidoreductase domain; the sequence is RGTAASISFM…YVGDKLVSLS (183 aa). The Cytoplasmic portion of the chain corresponds to 1102 to 1151; that stretch reads LTMCRNLITFLRETFLNRYVPFDAAVDFHRLIASTAIVLTVLHSAGHVVN. The helical transmembrane segment at 1152–1172 threads the bilayer; it reads VYLFSISPLSVLSCLFPGLFH. Topologically, residues 1173-1188 are extracellular; that stretch reads NDGSEFPQKYYWWFFQ. Residues 1189–1209 form a helical membrane-spanning segment; sequence TVPGLTGVMLLLVLAIMYVFA. Over 1210 to 1226 the chain is Cytoplasmic; that stretch reads SHHFRRHSFRGFWLTHH. The chain crosses the membrane as a helical span at residues 1227–1247; that stretch reads LYILLYVLLIIHGSFGLIQLP. A topological domain (extracellular) is located at residue Arg1248. The helical transmembrane segment at 1249–1269 threads the bilayer; it reads FHIFFLVPALIYVGDKLVSLS. Residues 1270 to 1376 enclose the FAD-binding FR-type domain; sequence RKKVEISVVK…DGPFGEGHQE (107 aa). Topologically, residues 1270–1551 are cytoplasmic; the sequence is RKKVEISVVK…THFSHHYENF (282 aa).

The protein in the N-terminal section; belongs to the peroxidase family. Interacts with TPO and CYBA. Interacts with TXNDC11. Post-translationally, N-glycosylated. In terms of tissue distribution, expressed in thyrocytes (at protein level). Specifically expressed in thyroid.

Its subcellular location is the apical cell membrane. The catalysed reaction is NADH + O2 + H(+) = H2O2 + NAD(+). The enzyme catalyses NADPH + O2 + H(+) = H2O2 + NADP(+). It participates in hormone biosynthesis; thyroid hormone biosynthesis. Peroxidase activity is inhibited by aminobenzohydrazide. The NADPH oxidase activity is calcium-dependent. Its function is as follows. Generates hydrogen peroxide which is required for the activity of thyroid peroxidase/TPO and lactoperoxidase/LPO. Plays a role in thyroid hormones synthesis and lactoperoxidase-mediated antimicrobial defense at the surface of mucosa. May have its own peroxidase activity through its N-terminal peroxidase-like domain. In Canis lupus familiaris (Dog), this protein is Dual oxidase 1 (DUOX1).